The primary structure comprises 485 residues: NADH-quinone oxidoreductase subunit N (485 aa).

14 helical membrane-spanning segments follow: residues 8 to 28 (LIAL…MLGI), 35 to 55 (FINA…LYFV), 78 to 98 (GLVI…LVGY), 104 to 124 (EFYL…SANH), 125 to 145 (LASL…LVGY), 159 to 179 (YMLL…LLYA), 203 to 223 (VLAG…LVPF), 235 to 255 (PAPV…AVVM), 271 to 291 (MVLS…AISQ), 297 to 317 (LLGY…IAVQ), 327 to 347 (GVYL…VSLM), 374 to 394 (AVMT…GFIG), 408 to 427 (WWLT…YYLR), and 449 to 469 (ALTA…LLGV).

The protein belongs to the complex I subunit 2 family. As to quaternary structure, NDH-1 is composed of 13 different subunits. Subunits NuoA, H, J, K, L, M, N constitute the membrane sector of the complex.

It is found in the cell inner membrane. The enzyme catalyses a quinone + NADH + 5 H(+)(in) = a quinol + NAD(+) + 4 H(+)(out). NDH-1 shuttles electrons from NADH, via FMN and iron-sulfur (Fe-S) centers, to quinones in the respiratory chain. The immediate electron acceptor for the enzyme in this species is believed to be ubiquinone. Couples the redox reaction to proton translocation (for every two electrons transferred, four hydrogen ions are translocated across the cytoplasmic membrane), and thus conserves the redox energy in a proton gradient. The sequence is that of NADH-quinone oxidoreductase subunit N from Serratia proteamaculans (strain 568).